The sequence spans 327 residues: Quinone oxidoreductase (327 aa).

This sequence belongs to the zinc-containing alcohol dehydrogenase family. Quinone oxidoreductase subfamily. In terms of assembly, homodimer.

The catalysed reaction is 2 a quinone + NADPH + H(+) = 2 a 1,4-benzosemiquinone + NADP(+). The sequence is that of Quinone oxidoreductase (qor) from Salmonella typhimurium (strain LT2 / SGSC1412 / ATCC 700720).